The chain runs to 279 residues: MNYLPAPPPGTTPLRVLSIAGSDSGGGAGIQADMRTMTVLGVHACTAVTAVTIQNTLGVEGFHEIPAEIVASQIKAVVTDIGIQSAKTGMLASSSIIAAVAETWLRLELTTPLVVDPVCASMHGDPLLTGEAMDSLRDRLFPLATVVTPNLDEVRLLVGIDVVDTESQRAAAMALHALGPQWALVKGGHLRSSDRSCDLLYGGSSAGVAFHEFDAPRVQTGNDHGGGDTLAAAVSCALAHGYTVPDAVGFGKRWVTECLRDAYPLGRGHGPVSPLFQRT.

Gln54 is a binding site for 4-amino-5-hydroxymethyl-2-methylpyrimidine.

The protein belongs to the ThiD family.

It catalyses the reaction 4-amino-5-hydroxymethyl-2-methylpyrimidine + ATP = 4-amino-2-methyl-5-(phosphooxymethyl)pyrimidine + ADP + H(+). The catalysed reaction is 4-amino-2-methyl-5-(phosphooxymethyl)pyrimidine + ATP = 4-amino-2-methyl-5-(diphosphooxymethyl)pyrimidine + ADP. The protein operates within cofactor biosynthesis; thiamine diphosphate biosynthesis; 4-amino-2-methyl-5-diphosphomethylpyrimidine from 5-amino-1-(5-phospho-D-ribosyl)imidazole: step 2/3. Its pathway is cofactor biosynthesis; thiamine diphosphate biosynthesis; 4-amino-2-methyl-5-diphosphomethylpyrimidine from 5-amino-1-(5-phospho-D-ribosyl)imidazole: step 3/3. Catalyzes the phosphorylation of hydroxymethylpyrimidine phosphate (HMP-P) to HMP-PP, and of HMP to HMP-P. The sequence is that of Hydroxymethylpyrimidine/phosphomethylpyrimidine kinase (thiD) from Mycobacterium leprae (strain TN).